The primary structure comprises 337 residues: tRNA N6-adenosine threonylcarbamoyltransferase (337 aa).

Fe cation contacts are provided by histidine 111 and histidine 115. Residues 134-138 (LVSGG), aspartate 167, glycine 180, and asparagine 272 contribute to the substrate site. Fe cation is bound at residue aspartate 300.

This sequence belongs to the KAE1 / TsaD family. Requires Fe(2+) as cofactor.

It localises to the cytoplasm. The enzyme catalyses L-threonylcarbamoyladenylate + adenosine(37) in tRNA = N(6)-L-threonylcarbamoyladenosine(37) in tRNA + AMP + H(+). In terms of biological role, required for the formation of a threonylcarbamoyl group on adenosine at position 37 (t(6)A37) in tRNAs that read codons beginning with adenine. Is involved in the transfer of the threonylcarbamoyl moiety of threonylcarbamoyl-AMP (TC-AMP) to the N6 group of A37, together with TsaE and TsaB. TsaD likely plays a direct catalytic role in this reaction. This is tRNA N6-adenosine threonylcarbamoyltransferase from Pectobacterium atrosepticum (strain SCRI 1043 / ATCC BAA-672) (Erwinia carotovora subsp. atroseptica).